The sequence spans 63 residues: Trypsin inhibitor 5 (63 aa).

The first 21 residues, 1–21 (MASVAESSGVVEVIELISDGG), serve as a signal peptide directing secretion. A propeptide spanning residues 22–34 (NDLPRKIMSGRHG) is cleaved from the precursor. Intrachain disulfides connect cysteine 37–cysteine 54, cysteine 44–cysteine 56, and cysteine 50–cysteine 62.

The protein belongs to the protease inhibitor I7 (squash-type serine protease inhibitor) family.

It localises to the secreted. Its function is as follows. Inhibits trypsin. The polypeptide is Trypsin inhibitor 5 (Luffa aegyptiaca (Sponge gourd)).